The primary structure comprises 453 residues: Probable 1,4-beta-D-glucan cellobiohydrolase A (453 aa).

Positions 1–17 are cleaved as a signal peptide; sequence MYQRALLFSALATAVSA. Catalysis depends on E226, which acts as the Nucleophile. E231 serves as the catalytic Proton donor. An N-linked (GlcNAc...) asparagine glycan is attached at N284.

This sequence belongs to the glycosyl hydrolase 7 (cellulase C) family.

The protein resides in the secreted. The enzyme catalyses Hydrolysis of (1-&gt;4)-beta-D-glucosidic linkages in cellulose and cellotetraose, releasing cellobiose from the non-reducing ends of the chains.. Functionally, the biological conversion of cellulose to glucose generally requires three types of hydrolytic enzymes: (1) Endoglucanases which cut internal beta-1,4-glucosidic bonds; (2) Exocellobiohydrolases that cut the disaccharide cellobiose from the non-reducing end of the cellulose polymer chain; (3) Beta-1,4-glucosidases which hydrolyze the cellobiose and other short cello-oligosaccharides to glucose. The chain is Probable 1,4-beta-D-glucan cellobiohydrolase A (cbhA) from Aspergillus clavatus (strain ATCC 1007 / CBS 513.65 / DSM 816 / NCTC 3887 / NRRL 1 / QM 1276 / 107).